A 98-amino-acid chain; its full sequence is NADH-ubiquinone oxidoreductase chain 4L (98 aa).

3 helical membrane-spanning segments follow: residues 1–21, 29–49, and 61–81; these read MPYI…GTLM, SLLC…LLSL, and LILL…LIMI.

This sequence belongs to the complex I subunit 4L family. In terms of assembly, core subunit of respiratory chain NADH dehydrogenase (Complex I) which is composed of 45 different subunits.

It localises to the mitochondrion inner membrane. It catalyses the reaction a ubiquinone + NADH + 5 H(+)(in) = a ubiquinol + NAD(+) + 4 H(+)(out). In terms of biological role, core subunit of the mitochondrial membrane respiratory chain NADH dehydrogenase (Complex I) which catalyzes electron transfer from NADH through the respiratory chain, using ubiquinone as an electron acceptor. Part of the enzyme membrane arm which is embedded in the lipid bilayer and involved in proton translocation. In Mammuthus primigenius (Siberian woolly mammoth), this protein is NADH-ubiquinone oxidoreductase chain 4L (MT-ND4L).